Reading from the N-terminus, the 172-residue chain is Ribosome maturation factor RimM (172 aa).

A PRC barrel domain is found at E96–L168.

It belongs to the RimM family. In terms of assembly, binds ribosomal protein uS19.

The protein resides in the cytoplasm. Its function is as follows. An accessory protein needed during the final step in the assembly of 30S ribosomal subunit, possibly for assembly of the head region. Essential for efficient processing of 16S rRNA. May be needed both before and after RbfA during the maturation of 16S rRNA. It has affinity for free ribosomal 30S subunits but not for 70S ribosomes. This is Ribosome maturation factor RimM from Streptococcus pyogenes serotype M1.